Consider the following 285-residue polypeptide: Complement C1q tumor necrosis factor-related protein 2 (285 aa).

Positions 1 to 15 (MIPWVLLACALPCAA) are cleaved as a signal peptide. Residues 33–144 (QLVCSLPGPQ…PGLPGPCSCG (112 aa)) are disordered. Residues 40-141 (GPQGPPGPPG…KGEPGLPGPC (102 aa)) form the Collagen-like domain. Residues 41 to 51 (PQGPPGPPGAP) show a composition bias toward pro residues. Residues 53-65 (PSGMMGRMGFPGK) show a composition bias toward low complexity. Over residues 66–78 (DGQDGHDGDRGDS) the composition is skewed to basic and acidic residues. Low complexity predominate over residues 84-120 (PGRTGNRGKPGPKGKAGAIGRAGPRGPKGVNGTPGKH). Residues 145-281 (SGHTKSAFSV…GFLIYADQDD (137 aa)) form the C1q domain.

As to quaternary structure, may interact with ERFE. In terms of tissue distribution, expressed in adipose tissue.

The protein localises to the secreted. Its function is as follows. Involved in the regulation of lipid metabolism in adipose tissue and liver. This chain is Complement C1q tumor necrosis factor-related protein 2 (C1QTNF2), found in Homo sapiens (Human).